We begin with the raw amino-acid sequence, 390 residues long: 1-acyl-sn-glycerol-3-phosphate acyltransferase 2 (390 aa).

The helical transmembrane segment at 2–22 (AMAAAVIVPLGILFFISGLVV) threads the bilayer. Positions 91 to 96 (HRSDID) match the HXXXXD motif motif. The next 2 membrane-spanning stretches (helical) occupy residues 305–325 (LAVV…FLHW) and 333–353 (KGIA…QILI). Positions 358–390 (SERSTPAKVAPAKPKDNHQSGPSSQTEVEEKQK) are disordered.

It belongs to the 1-acyl-sn-glycerol-3-phosphate acyltransferase family.

The protein resides in the endoplasmic reticulum membrane. The enzyme catalyses a 1-acyl-sn-glycero-3-phosphate + an acyl-CoA = a 1,2-diacyl-sn-glycero-3-phosphate + CoA. The protein operates within phospholipid metabolism; CDP-diacylglycerol biosynthesis; CDP-diacylglycerol from sn-glycerol 3-phosphate: step 2/3. Functionally, converts lysophosphatidic acid (LPA) into phosphatidic acid by incorporating acyl moiety at the 2 position. The polypeptide is 1-acyl-sn-glycerol-3-phosphate acyltransferase 2 (LPAT2) (Brassica napus (Rape)).